The following is a 302-amino-acid chain: Dihydroorotate dehydrogenase B (NAD(+)), catalytic subunit (302 aa).

Residues Ser23 and 47–48 each bind FMN; that span reads KG. Substrate contacts are provided by residues Lys47 and 71–75; that span reads NSVGL. Residues Asn101 and Asn128 each contribute to the FMN site. Asn128 provides a ligand contact to substrate. The Nucleophile role is filled by Cys131. Positions 166 and 192 each coordinate FMN. A substrate-binding site is contributed by 193 to 194; sequence NT. Residues Gly218, 244 to 245, and 266 to 267 each bind FMN; these read GG and GT.

It belongs to the dihydroorotate dehydrogenase family. Type 1 subfamily. Heterotetramer of 2 PyrK and 2 PyrD type B subunits. The cofactor is FMN.

The protein resides in the cytoplasm. It catalyses the reaction (S)-dihydroorotate + NAD(+) = orotate + NADH + H(+). It functions in the pathway pyrimidine metabolism; UMP biosynthesis via de novo pathway; orotate from (S)-dihydroorotate (NAD(+) route): step 1/1. Catalyzes the conversion of dihydroorotate to orotate with NAD(+) as electron acceptor. The chain is Dihydroorotate dehydrogenase B (NAD(+)), catalytic subunit (pyrD) from Alkaliphilus metalliredigens (strain QYMF).